Reading from the N-terminus, the 510-residue chain is GMP synthase [glutamine-hydrolyzing] (510 aa).

The Glutamine amidotransferase type-1 domain occupies 5–195 (LVLVVDFGGQ…LFNVCNLKGD (191 aa)). C82 acts as the Nucleophile in catalysis. Catalysis depends on residues H169 and E171. The 190-residue stretch at 196–385 (WSMSSFAEQQ…LGIPHKLVWR (190 aa)) folds into the GMPS ATP-PPase domain. ATP is bound at residue 223–229 (SGGVDSS).

In terms of assembly, homodimer.

It catalyses the reaction XMP + L-glutamine + ATP + H2O = GMP + L-glutamate + AMP + diphosphate + 2 H(+). It functions in the pathway purine metabolism; GMP biosynthesis; GMP from XMP (L-Gln route): step 1/1. Its function is as follows. Catalyzes the synthesis of GMP from XMP. The polypeptide is GMP synthase [glutamine-hydrolyzing] (Clostridium botulinum (strain Okra / Type B1)).